The primary structure comprises 128 residues: Large ribosomal subunit protein eL22 (128 aa).

Thr62 is modified (phosphothreonine). Phosphoserine is present on Ser66. Lys69 carries the N6-succinyllysine modification.

Belongs to the eukaryotic ribosomal protein eL22 family. In terms of assembly, component of the large ribosomal subunit.

It localises to the cytoplasm. In terms of biological role, component of the large ribosomal subunit. The ribosome is a large ribonucleoprotein complex responsible for the synthesis of proteins in the cell. The protein is Large ribosomal subunit protein eL22 (RPL22) of Sus scrofa (Pig).